Reading from the N-terminus, the 144-residue chain is Protein cornichon homolog 1 (144 aa).

At 1–10 (MAFTFAAFCY) the chain is on the cytoplasmic side. A helical transmembrane segment spans residues 11–31 (MLALLLTAALIFFAIWHIIAF). Residues 32–56 (DELKTDYKNPIDQCNTLNPLVLPEY) lie on the Lumenal side of the membrane. A helical transmembrane segment spans residues 57-77 (LIHAFFCVMFLCAAEWLTLGL). The Cytoplasmic portion of the chain corresponds to 78–122 (NMPLLAYHIWRYMSRPVMSGPGLYDPTTIMNADILAYCQKEGWCK). A helical membrane pass occupies residues 123–143 (LAFYLLAFFYYLYGMIYVLVS). A topological domain (lumenal) is located at residue serine 144.

This sequence belongs to the cornichon family. In terms of assembly, interacts with AREG immature precursor and with immature TGFA, i.e. with a prosegment and lacking full N-glycosylation, but not with the fully N-glycosylated form. In the Golgi apparatus, may form a complex with GORASP55 and transmembrane TGFA.

The protein localises to the endoplasmic reticulum membrane. The protein resides in the golgi apparatus membrane. In terms of biological role, involved in the selective transport and maturation of TGF-alpha family proteins. The polypeptide is Protein cornichon homolog 1 (CNIH1) (Bos taurus (Bovine)).